Here is a 2193-residue protein sequence, read N- to C-terminus: Genome polyprotein (2193 aa).

The N-myristoyl glycine; by host moiety is linked to residue Gly2. The Cytoplasmic segment spans residues 2–1503 (GAQVSTQKTG…HVSRAFICLQ (1502 aa)). Residues 567-583 (ELQSDVREAVEGAIGRV) are amphipathic alpha-helix. Active-site for protease 2A activity residues include His880 and Asp898. Cys915 and Cys917 together coordinate Zn(2+). Cys969 (for protease 2A activity) is an active-site residue. Residues Cys975 and His977 each coordinate Zn(2+). The interval 1109–1181 (NNRWLKKFTE…EQSAPSQGDQ (73 aa)) is membrane-binding. The tract at residues 1109-1247 (NNRWLKKFTE…SPGAGKSVAT (139 aa)) is oligomerization. The segment at 1130–1134 (AIKIQ) is RNA-binding. The SF3 helicase domain occupies 1213–1369 (EKKMSNYIQF…SMYSQNGKIN (157 aa)). The Zn(2+) site is built by Cys1377, Cys1389, and Cys1394. The segment at 1377 to 1394 (CDEECCPVNFKKCCPLVC) adopts a C4-type; degenerate zinc-finger fold. The tract at residues 1421 to 1428 (EYNHRHSV) is RNA-binding. The tract at residues 1432–1437 (LEALFQ) is oligomerization. Residues 1504 to 1519 (ALTTFVSVAGIIYIIY) lie within the membrane without spanning it. At 1520–2193 (KLFAGFQGAY…TLRRKWLDSF (674 aa)) the chain is on the cytoplasmic side. Tyr1529 is subject to O-(5'-phospho-RNA)-tyrosine. The Peptidase C3 domain maps to 1549–1727 (GPAFEFAVAM…FSAALLKHYF (179 aa)). Residues His1588, Glu1619, and Cys1695 each act as for protease 3C activity in the active site. One can recognise a RdRp catalytic domain in the interval 1958–2074 (GHLIAFDYSG…SYPWPIDASL (117 aa)). Mg(2+) contacts are provided by Asp1964 and Asp2060.

The protein belongs to the picornaviruses polyprotein family. In terms of assembly, interacts with capsid protein VP1 and capsid protein VP3 to form heterotrimeric protomers. Interacts with capsid protein VP0, and capsid protein VP3 to form heterotrimeric protomers. Five protomers subsequently associate to form pentamers which serve as building blocks for the capsid. Interacts with capsid protein VP2, capsid protein VP3 and capsid protein VP4 following cleavage of capsid protein VP0. As to quaternary structure, interacts with capsid protein VP1 and capsid protein VP3 in the mature capsid. In terms of assembly, interacts with capsid protein VP0 and capsid protein VP1 to form heterotrimeric protomers. Five protomers subsequently associate to form pentamers which serve as building blocks for the capsid. Interacts with capsid protein VP4 in the mature capsid. Interacts with protein 2C; this interaction may be important for virion morphogenesis. Interacts with capsid protein VP1 and capsid protein VP3. As to quaternary structure, homodimer. In terms of assembly, homohexamer; forms a hexameric ring structure with 6-fold symmetry characteristic of AAA+ ATPases. Interacts (via N-terminus) with host RTN3 (via reticulon domain); this interaction is important for viral replication. Interacts with capsid protein VP3; this interaction may be important for virion morphogenesis. Interacts with protein 3CD. As to quaternary structure, homodimer. Interacts with host GBF1. Interacts (via GOLD domain) with host ACBD3 (via GOLD domain); this interaction allows the formation of a viral protein 3A/ACBD3 heterotetramer with a 2:2 stoichiometry, which will stimulate the recruitment of host PI4KB in order to synthesize PI4P at the viral RNA replication sites. In terms of assembly, interacts with RNA-directed RNA polymerase. Interacts with protein 3AB and with RNA-directed RNA polymerase. As to quaternary structure, interacts with Viral protein genome-linked and with protein 3CD. The cofactor is Mg(2+). Specific enzymatic cleavages in vivo by the viral proteases yield processing intermediates and the mature proteins. In terms of processing, myristoylation is required for the formation of pentamers during virus assembly. Further assembly of 12 pentamers and a molecule of genomic RNA generates the provirion. Post-translationally, during virion maturation, immature virions are rendered infectious following cleavage of VP0 into VP4 and VP2. This maturation seems to be an autocatalytic event triggered by the presence of RNA in the capsid and it is followed by a conformational change infectious virion. Myristoylation is required during RNA encapsidation and formation of the mature virus particle. In terms of processing, VPg is uridylylated by the polymerase into VPg-pUpU. This acts as a nucleotide-peptide primer for the genomic RNA replication.

The protein resides in the virion. It localises to the host cytoplasm. Its subcellular location is the host cytoplasmic vesicle membrane. It is found in the host nucleus. The enzyme catalyses a ribonucleoside 5'-triphosphate + H2O = a ribonucleoside 5'-diphosphate + phosphate + H(+). It carries out the reaction Selective cleavage of Tyr-|-Gly bond in the picornavirus polyprotein.. It catalyses the reaction RNA(n) + a ribonucleoside 5'-triphosphate = RNA(n+1) + diphosphate. The catalysed reaction is Selective cleavage of Gln-|-Gly bond in the poliovirus polyprotein. In other picornavirus reactions Glu may be substituted for Gln, and Ser or Thr for Gly.. With respect to regulation, replication or transcription is subject to high level of random mutations by the nucleotide analog ribavirin. Forms an icosahedral capsid of pseudo T=3 symmetry with capsid proteins VP2 and VP3. The capsid is 300 Angstroms in diameter, composed of 60 copies of each capsid protein and enclosing the viral positive strand RNA genome. Capsid protein VP1 mainly forms the vertices of the capsid. Capsid protein VP1 interacts with host cell receptor to provide virion attachment to target host cells. This attachment induces virion internalization. Tyrosine kinases are probably involved in the entry process. After binding to its receptor, the capsid undergoes conformational changes. Capsid protein VP1 N-terminus (that contains an amphipathic alpha-helix) and capsid protein VP4 are externalized. Together, they shape a pore in the host membrane through which viral genome is translocated to host cell cytoplasm. In terms of biological role, forms an icosahedral capsid of pseudo T=3 symmetry with capsid proteins VP2 and VP3. The capsid is 300 Angstroms in diameter, composed of 60 copies of each capsid protein and enclosing the viral positive strand RNA genome. Its function is as follows. Lies on the inner surface of the capsid shell. After binding to the host receptor, the capsid undergoes conformational changes. Capsid protein VP4 is released, Capsid protein VP1 N-terminus is externalized, and together, they shape a pore in the host membrane through which the viral genome is translocated into the host cell cytoplasm. Functionally, component of immature procapsids, which is cleaved into capsid proteins VP4 and VP2 after maturation. Allows the capsid to remain inactive before the maturation step. Cysteine protease that cleaves viral polyprotein and specific host proteins. It is responsible for the autocatalytic cleavage between the P1 and P2 regions, which is the first cleavage occurring in the polyprotein. Also cleaves the host translation initiation factor EIF4G1, in order to shut down the capped cellular mRNA translation. Inhibits the host nucleus-cytoplasm protein and RNA trafficking by cleaving host members of the nuclear pores. Counteracts stress granule formation probably by antagonizing its assembly or promoting its dissassembly. In terms of biological role, plays an essential role in the virus replication cycle by acting as a viroporin. Creates a pore in the host endoplasmic reticulum and as a consequence releases Ca2+ in the cytoplasm of infected cell. In turn, high levels of cytoplasmic calcium may trigger membrane trafficking and transport of viral ER-associated proteins to viroplasms, sites of viral genome replication. Its function is as follows. Induces and associates with structural rearrangements of intracellular membranes. Displays RNA-binding, nucleotide binding and NTPase activities. May play a role in virion morphogenesis and viral RNA encapsidation by interacting with the capsid protein VP3. Functionally, localizes the viral replication complex to the surface of membranous vesicles. Together with protein 3CD binds the Cis-Active RNA Element (CRE) which is involved in RNA synthesis initiation. Acts as a cofactor to stimulate the activity of 3D polymerase, maybe through a nucleid acid chaperone activity. Localizes the viral replication complex to the surface of membranous vesicles. It inhibits host cell endoplasmic reticulum-to-Golgi apparatus transport and causes the disassembly of the Golgi complex, possibly through GBF1 interaction. This would result in depletion of MHC, trail receptors and IFN receptors at the host cell surface. Plays an essential role in viral RNA replication by recruiting ACBD3 and PI4KB at the viral replication sites, thereby allowing the formation of the rearranged membranous structures where viral replication takes place. In terms of biological role, acts as a primer for viral RNA replication and remains covalently bound to viral genomic RNA. VPg is uridylylated prior to priming replication into VPg-pUpU. The oriI viral genomic sequence may act as a template for this. The VPg-pUpU is then used as primer on the genomic RNA poly(A) by the RNA-dependent RNA polymerase to replicate the viral genome. During genome replication, the VPg-RNA linkage is removed by the host TDP2, thereby accelerating replication. During the late stage of the replication cycle, host TDP2 is excluded from sites of viral RNA synthesis and encapsidation, allowing for the generation of progeny virions. Its function is as follows. Involved in the viral replication complex and viral polypeptide maturation. It exhibits protease activity with a specificity and catalytic efficiency that is different from protease 3C. Protein 3CD lacks polymerase activity. Protein 3CD binds to the 5'UTR of the viral genome. Functionally, replicates the viral genomic RNA on the surface of intracellular membranes. May form linear arrays of subunits that propagate along a strong head-to-tail interaction called interface-I. Covalently attaches UMP to a tyrosine of VPg, which is used to prime RNA synthesis. The positive stranded RNA genome is first replicated at virus induced membranous vesicles, creating a dsRNA genomic replication form. This dsRNA is then used as template to synthesize positive stranded RNA genomes. ss(+)RNA genomes are either translated, replicated or encapsidated. Major viral protease that mediates proteolytic processing of the polyprotein. Cleaves host EIF5B, contributing to host translation shutoff. Also cleaves host PABPC1, contributing to host translation shutoff. Cleaves host NLRP1, triggers host N-glycine-mediated degradation of the autoinhibitory NLRP1 N-terminal fragment. In Echovirus 9 (strain Hill), this protein is Genome polyprotein.